An 846-amino-acid polypeptide reads, in one-letter code: Aminopeptidase N (846 aa).

Substrate-binding positions include glutamate 120 and 252–256; that span reads GAMEN. Histidine 288 provides a ligand contact to Zn(2+). Glutamate 289 functions as the Proton acceptor in the catalytic mechanism. Histidine 292 and glutamate 311 together coordinate Zn(2+).

It belongs to the peptidase M1 family. In terms of assembly, monomer. The cofactor is Zn(2+).

The protein localises to the cytoplasm. The enzyme catalyses Release of an N-terminal amino acid, Xaa-|-Yaa- from a peptide, amide or arylamide. Xaa is preferably Ala, but may be most amino acids including Pro (slow action). When a terminal hydrophobic residue is followed by a prolyl residue, the two may be released as an intact Xaa-Pro dipeptide.. Aminopeptidase with broad substrate specificity to several peptides. It has more affinity for oligopeptides than for dipeptides. It plays an essential role in the metabolism, it may be involved in nitrogen supply or protein turnover. The polypeptide is Aminopeptidase N (pepN) (Lactococcus lactis subsp. cremoris (strain MG1363)).